Here is a 251-residue protein sequence, read N- to C-terminus: 5-oxoprolinase subunit A 2 (251 aa).

The protein belongs to the LamB/PxpA family. Forms a complex composed of PxpA, PxpB and PxpC.

The catalysed reaction is 5-oxo-L-proline + ATP + 2 H2O = L-glutamate + ADP + phosphate + H(+). Catalyzes the cleavage of 5-oxoproline to form L-glutamate coupled to the hydrolysis of ATP to ADP and inorganic phosphate. This Pseudomonas syringae pv. tomato (strain ATCC BAA-871 / DC3000) protein is 5-oxoprolinase subunit A 2.